A 349-amino-acid chain; its full sequence is Ribosomal RNA small subunit methyltransferase C (349 aa).

It belongs to the methyltransferase superfamily. RsmC family. In terms of assembly, monomer.

Its subcellular location is the cytoplasm. It catalyses the reaction guanosine(1207) in 16S rRNA + S-adenosyl-L-methionine = N(2)-methylguanosine(1207) in 16S rRNA + S-adenosyl-L-homocysteine + H(+). Functionally, specifically methylates the guanine in position 1207 of 16S rRNA in the 30S particle. This chain is Ribosomal RNA small subunit methyltransferase C, found in Psychromonas ingrahamii (strain DSM 17664 / CCUG 51855 / 37).